The sequence spans 396 residues: Elongation factor Tu (396 aa).

The region spanning 10–206 (KPHVNIGTIG…AVDSYIPDPE (197 aa)) is the tr-type G domain. A G1 region spans residues 19–26 (GHVDHGKT). Position 19 to 26 (19 to 26 (GHVDHGKT)) interacts with GTP. T26 is a Mg(2+) binding site. The segment at 60-64 (GITIA) is G2. Residues 81–84 (DCPG) form a G3 region. GTP contacts are provided by residues 81 to 85 (DCPGH) and 136 to 139 (NKAD). The segment at 136–139 (NKAD) is G4. Positions 174 to 176 (SAL) are G5.

The protein belongs to the TRAFAC class translation factor GTPase superfamily. Classic translation factor GTPase family. EF-Tu/EF-1A subfamily. In terms of assembly, monomer.

The protein localises to the cytoplasm. The enzyme catalyses GTP + H2O = GDP + phosphate + H(+). In terms of biological role, GTP hydrolase that promotes the GTP-dependent binding of aminoacyl-tRNA to the A-site of ribosomes during protein biosynthesis. The protein is Elongation factor Tu of Pelobacter propionicus (strain DSM 2379 / NBRC 103807 / OttBd1).